The following is a 348-amino-acid chain: S-adenosylmethionine:tRNA ribosyltransferase-isomerase (348 aa).

Belongs to the QueA family. As to quaternary structure, monomer.

Its subcellular location is the cytoplasm. It carries out the reaction 7-aminomethyl-7-carbaguanosine(34) in tRNA + S-adenosyl-L-methionine = epoxyqueuosine(34) in tRNA + adenine + L-methionine + 2 H(+). Its pathway is tRNA modification; tRNA-queuosine biosynthesis. Functionally, transfers and isomerizes the ribose moiety from AdoMet to the 7-aminomethyl group of 7-deazaguanine (preQ1-tRNA) to give epoxyqueuosine (oQ-tRNA). The chain is S-adenosylmethionine:tRNA ribosyltransferase-isomerase from Tolumonas auensis (strain DSM 9187 / NBRC 110442 / TA 4).